The chain runs to 882 residues: DNA polymerase 1 (882 aa).

Residues 1 to 31 are disordered; it reads MTKQLTLFDIPSSKPAKSEQNTQQSQQSAPV. Positions 18-29 are enriched in polar residues; that stretch reads SEQNTQQSQQSA.

This sequence belongs to the DNA polymerase type-B family. Interacts with PCNA subunit PCNA2 and weakly with PCNA3.

It catalyses the reaction DNA(n) + a 2'-deoxyribonucleoside 5'-triphosphate = DNA(n+1) + diphosphate. Its activity is regulated as follows. DNA synthesis is stimulated by PCNA heterotrimers. In terms of biological role, this polymerase possesses two enzymatic activities: DNA synthesis (polymerase) and an exonucleolytic activity that degrades single-stranded DNA in the 3'- to 5'-direction. DNA polymerase I, DNA ligase and the flap endonuclease may be constitutively associated with the PCNA heterotrimer forming a scanning complex able to couple DNA synthesis and Okazaki fragment maturation. This is DNA polymerase 1 (dpo1) from Saccharolobus solfataricus (strain ATCC 35092 / DSM 1617 / JCM 11322 / P2) (Sulfolobus solfataricus).